The sequence spans 587 residues: MFTGQEYHSVDSNSNKQKDNNKRGIDDTSKILNNKIPHSVSDTSAAATTTSTMNNSALSRSLDPTDINYSTNMAGVVDQIHDYTTSNRNSLTPQYSIAAGNVNSHDRVVKPSANSNYQQAAYLRQQQQQDQRQQSPSMKTEEESQLYGDILMNSGVVQDMHQNLATHTNLSQLSSTRKSAPNDSTTAPTNASNIANTASVNKQMYFMNMNMNNNPHALNDPSILETLSPFFQPFGVDVAHLPMTNPPIFQSSLPGCDEPIRRRRISISNGQISQLGEDIETLENLHNTQPPPMPNFHNYNGLSQTRNVSNKPVFNQAVPVSSIPQYNAKKVINPTKDSALGDQSVIYSKSQQRNFVNAPSKNTPAESISDLEGMTTFAPTTGGENRGKSALRESHSNPSFTPKSQGSHLNLAANTQGNPIPGTTAWKRARLLERNRIAASKCRQRKKVAQLQLQKEFNEIKDENRILLKKLNYYEKLISKFKKFSKIHLREHEKLNKDSDNNVNGTNSSNKNESMTVDSLKIIEELLMIDSDVTEVDKDTGKIIAIKHEPYSQRFGSDTDDDDIDLKPVEGGKDPDNQSLPNSEKIK.

Disordered stretches follow at residues 1–62 (MFTG…SRSL), 123–144 (LRQQ…EEES), 169–195 (NLSQ…SNIA), and 381–423 (TGGE…IPGT). Positions 16 to 29 (KQKDNNKRGIDDTS) are enriched in basic and acidic residues. 2 stretches are compositionally biased toward low complexity: residues 39–57 (SVSD…NNSA) and 123–134 (LRQQQQQDQRQQ). Phosphoserine is present on residues Ser-171 and Ser-179. The span at 385–395 (NRGKSALRESH) shows a compositional bias: basic and acidic residues. The segment covering 396 to 418 (SNPSFTPKSQGSHLNLAANTQGN) has biased composition (polar residues). Phosphoserine is present on Ser-399. In terms of domain architecture, bZIP spans 425-488 (AWKRARLLER…SKFKKFSKIH (64 aa)). The basic motif stretch occupies residues 427 to 447 (KRARLLERNRIAASKCRQRKK). The interval 453 to 467 (LQKEFNEIKDENRIL) is leucine-zipper. The interval 552–587 (SQRFGSDTDDDDIDLKPVEGGKDPDNQSLPNSEKIK) is disordered. The residue at position 557 (Ser-557) is a Phosphoserine. Thr-559 carries the phosphothreonine modification. Over residues 565–576 (DLKPVEGGKDPD) the composition is skewed to basic and acidic residues. The span at 577-587 (NQSLPNSEKIK) shows a compositional bias: polar residues.

This sequence belongs to the bZIP family.

The protein resides in the nucleus. In terms of biological role, transcriptional activator of promoters containing ATF/CREB sites. Can independently stimulate transcription through ATF/CREB sites. Important for a variety of biological functions including growth on non-optimal carbon sources. This is ATF/CREB activator 2 (CST6) from Saccharomyces cerevisiae (strain ATCC 204508 / S288c) (Baker's yeast).